Reading from the N-terminus, the 450-residue chain is Protein tailless (450 aa).

The segment at residues 31–108 is a DNA-binding region (nuclear receptor); sequence HVPCKVCRDH…VGMNKDAVQH (78 aa). NR C4-type zinc fingers lie at residues 34-54 and 70-96; these read CKVC…CDGC and CKSQ…LRKC. In terms of domain architecture, NR LBD spans 187 to 448; it reads VPRVPHHPVH…RLISDMYSQR (262 aa).

The protein belongs to the nuclear hormone receptor family. NR2 subfamily. In terms of assembly, monomer.

The protein resides in the nucleus. Orphan receptor that binds DNA as a monomer to hormone response elements (HRE) containing an extended core motif half-site sequence 5'-AAGTCA-3' in which the 5' flanking nucleotides participate in determining receptor specificity. This receptor binds to the consensus sequence [AG][AG]AAGTCAA. Plays a key role in the establishment of non-metameric domains at the anterior and posterior poles of the embryo. It may also play a role in the nervous system. The maternal terminal pathway activates the tll gene in the termini; TLL activity then represses segmentation and activates terminal-specific genes in these domains. Involved in the regulation of early eye development. In the embryonic visual system anlage drives cells to optic lobe as opposed to Bolwig's organ fate. The polypeptide is Protein tailless (tll) (Drosophila virilis (Fruit fly)).